We begin with the raw amino-acid sequence, 615 residues long: MPIQVLPPQLANQIAAGEVVERPASVVKELVENSLDAGATRIDIDIERGGAKLIRIRDNGCGIKKDELALALARHATSKIASLDDLEAIISLGFRGEALASISSVSRLTLTSRTAEQQEAWQAYAEGRDMDVTVKPAAHPVGTTLEVLDLFYNTPARRKFLRTEKTEFSHIDEIIRRIALARFDVTINLSHNGKIVRQYRAVPEGGQKERRLGAICGTAFLEQALAIEWQHGDLTLRGWVADPNHTTPALAEIQYCYVNGRMMRDRLINHAIRQACEDKLGADQQPAFVLYLEIDPHQVDVNVHPAKHEVRFHQSRLVHDFIYQGVLSVLQQQLETPLPLDDEPQPAPRSIPENRVAAGRNHFAEPAAREPVAPRYTPAPASGSRPAAPWPNAQPGYQKQQGEVYRQLLQTPAPMQKLKAPEPQEPALAANSQSFGRVLTIVHSDCALLERDGNISLLALPVAERWLRQVQLTPGEAPVCAQPLLIPLRLKVSGEEKSALEKAQSALAELGIDFQSDAQHVTIRAVPLPLRQQNLQILIPELIGYLAKQSVFEPGNIAQWIARNLMSEHAQWSMAQAITLLADVERLCPQLVKTPPGGLLQSVDLHPAIKALKDE.

Positions Phe363–Tyr397 are disordered. Over residues Ala364 to Pro391 the composition is skewed to low complexity.

This sequence belongs to the DNA mismatch repair MutL/HexB family.

Functionally, this protein is involved in the repair of mismatches in DNA. It is required for dam-dependent methyl-directed DNA mismatch repair. May act as a 'molecular matchmaker', a protein that promotes the formation of a stable complex between two or more DNA-binding proteins in an ATP-dependent manner without itself being part of a final effector complex. The sequence is that of DNA mismatch repair protein MutL from Shigella boydii serotype 4 (strain Sb227).